The following is a 447-amino-acid chain: NADH peroxidase (447 aa).

FAD is bound by residues 7 to 11 (GSSHG), Glu32, Cys42, 110 to 113 (SPGA), and Arg132. The active-site Proton acceptor is His10. Cys42 acts as the Redox-active in catalysis. The residue at position 42 (Cys42) is a Cysteine sulfenic acid (-SOH). Positions 160, 179, 188, and 243 each coordinate NAD(+). Asp281 provides a ligand contact to FAD. Ala297 is an NAD(+) binding site. FAD is bound at residue Ala299. Gly328 is a binding site for NAD(+).

The protein belongs to the class-III pyridine nucleotide-disulfide oxidoreductase family. In terms of assembly, homotetramer. FAD is required as a cofactor.

The catalysed reaction is H2O2 + NADH + H(+) = NAD(+) + 2 H2O. Peroxidase whose active site is a redox-active cysteine-sulfenic acid. This is NADH peroxidase (npr) from Enterococcus faecalis (strain ATCC 700802 / V583).